The sequence spans 530 residues: PC4 and SFRS1-interacting protein (530 aa).

Residues 1–64 form the PWWP domain; sequence MTRDFKPGDL…PKDIFPYSEN (64 aa). Lys75 is covalently cross-linked (Glycyl lysine isopeptide (Lys-Gly) (interchain with G-Cter in SUMO2)). The disordered stretch occupies residues 88 to 349; sequence PKVKFSSQQA…VEKKRETSMD (262 aa). Polar residues predominate over residues 92–104; it reads FSSQQAATKQSNA. Residues Ser102, Ser105, and Ser106 each carry the phosphoserine modification. A compositionally biased stretch (basic and acidic residues) spans 113-135; it reads KETSVSKEDTDHEEKASNEDVTK. Thr115 and Thr122 each carry phosphothreonine. Phosphoserine is present on Ser129. A Phosphothreonine modification is found at Thr141. The span at 144–153 shows a compositional bias: basic residues; that stretch reads AARRGRKRKA. Positions 146 to 156 match the Nuclear localization signal motif; it reads RRGRKRKAEKQ. Residue Thr167 is modified to Phosphothreonine. Residues Ser177 and Ser206 each carry the phosphoserine modification. Over residues 213 to 261 the composition is skewed to basic and acidic residues; that stretch reads EEDKSKKKGQEEKQPKKQPKKDEEGQKEEDKPRKEPDKKEGKKEVESKR. Residue Ser271 is modified to Phosphoserine. Thr272 is modified (phosphothreonine). Residues Ser273 and Ser275 each carry the phosphoserine modification. Residues 274–283 are compositionally biased toward acidic residues; that stretch reads DSEEEGDDQE. A compositionally biased stretch (basic residues) spans 287–302; that stretch reads KRKGGRNFQTAHRRNM. Residues 305–349 are compositionally biased toward basic and acidic residues; it reads GQHEKEAADRKRKQEEQMETEQQNKDEGKKPEVKKVEKKRETSMD. 2 coiled-coil regions span residues 306–334 and 371–395; these read QHEK…EGKK and NRCI…KHTE. Residues 340–417 are integrase-binding domain (IBD); sequence VEKKRETSMD…VSQVIMEKST (78 aa). Ser434 is modified (phosphoserine). Phosphothreonine is present on Thr437. Ser443 carries the phosphoserine modification. Positions 446 to 473 are enriched in basic and acidic residues; that stretch reads EQRQHEEANKTKDQGKKGPNKKLEKEQT. A disordered region spans residues 446–530; the sequence is EQRQHEEANK…ISLKDSTLDN (85 aa). Positions 474–494 are enriched in polar residues; the sequence is GSKTLNGGSDAQDGNQPQHNG. A compositionally biased stretch (basic and acidic residues) spans 498–530; sequence EDSKDNHEASTKKKPSSEERETEISLKDSTLDN. Ser514 is subject to Phosphoserine. Residue Arg517 is modified to Citrulline. Ser522 is modified (phosphoserine). Thr527 carries the post-translational modification Phosphothreonine.

The protein belongs to the HDGF family. Monomer. Interacts with IFRD1/PC4. Isoform 2 interacts with SFRS1. Isoform 1 interacts (via IBD domain) with POGZ (via IBM motif) and CDCA7L (via IBM motifs). Interacts (via IBD domain) with KMT2A (via IBM motifs) with a moderate affinity whereas interacts with the KMT2A-MEN1 complex with a greater affinity; MEN1 enhances interaction of KMT2A with PSIP1. Interacts with fusion protein KMT2A-MLLT3. Interacts (via IBD domain) with IWS1 (via IBM motif), MED1 (via IBM motif) and DBF4 (via IBM motifs). As to quaternary structure, (Microbial infection) Interacts (via IBD domain) with human HIV-1 integrase protein (HIV-1 IN), determining its nuclear localization, its tight association with chromatin and its protection from the proteasome. In terms of assembly, (Microbial infection) Interacts with HIV-2 IN. In terms of processing, citrullinated by PADI4. As to expression, widely expressed. Expressed at high level in the thymus. Expressed in fetal and adult brain. Expressed in neurons, but not astrocytes. Markedly elevated in fetal as compared to adult brain. In the adult brain, expressed in the subventricular zone (SVZ), in hippocampus, and undetectable elsewhere. In the fetal brain, expressed in the germinal neuroepithelium and cortical plate regions.

The protein localises to the nucleus. Its function is as follows. Transcriptional coactivator involved in neuroepithelial stem cell differentiation and neurogenesis. Involved in particular in lens epithelial cell gene regulation and stress responses. May play an important role in lens epithelial to fiber cell terminal differentiation. May play a protective role during stress-induced apoptosis. Isoform 2 is a more general and stronger transcriptional coactivator. Isoform 2 may also act as an adapter to coordinate pre-mRNA splicing. Cellular cofactor for lentiviral integration. The chain is PC4 and SFRS1-interacting protein (PSIP1) from Homo sapiens (Human).